Reading from the N-terminus, the 396-residue chain is Tryptophan synthase beta chain (396 aa).

Lysine 86 bears the N6-(pyridoxal phosphate)lysine mark.

This sequence belongs to the TrpB family. As to quaternary structure, tetramer of two alpha and two beta chains. Pyridoxal 5'-phosphate is required as a cofactor.

The catalysed reaction is (1S,2R)-1-C-(indol-3-yl)glycerol 3-phosphate + L-serine = D-glyceraldehyde 3-phosphate + L-tryptophan + H2O. The protein operates within amino-acid biosynthesis; L-tryptophan biosynthesis; L-tryptophan from chorismate: step 5/5. The beta subunit is responsible for the synthesis of L-tryptophan from indole and L-serine. This Pectobacterium atrosepticum (strain SCRI 1043 / ATCC BAA-672) (Erwinia carotovora subsp. atroseptica) protein is Tryptophan synthase beta chain.